We begin with the raw amino-acid sequence, 466 residues long: 23S rRNA (uracil(1939)-C(5))-methyltransferase RlmD (466 aa).

The region spanning 1–54 (MVDVLNIESLDLEARGIAHRDGKVLFVEGALPGERVTVQTVRRKPSYEIAKVEE) is the TRAM domain. Residues cysteine 67, cysteine 73, cysteine 76, and cysteine 155 each contribute to the [4Fe-4S] cluster site. Glutamine 264, phenylalanine 293, asparagine 298, glutamate 314, asparagine 342, and aspartate 363 together coordinate S-adenosyl-L-methionine. The active-site Nucleophile is the cysteine 393.

It belongs to the class I-like SAM-binding methyltransferase superfamily. RNA M5U methyltransferase family. RlmD subfamily.

The catalysed reaction is uridine(1939) in 23S rRNA + S-adenosyl-L-methionine = 5-methyluridine(1939) in 23S rRNA + S-adenosyl-L-homocysteine + H(+). Functionally, catalyzes the formation of 5-methyl-uridine at position 1939 (m5U1939) in 23S rRNA. In Bordetella parapertussis (strain 12822 / ATCC BAA-587 / NCTC 13253), this protein is 23S rRNA (uracil(1939)-C(5))-methyltransferase RlmD.